The following is a 1004-amino-acid chain: Zinc finger protein 316 (1004 aa).

The segment at 1 to 148 (MAALHTTPDS…EEEEDEDEDD (148 aa)) is disordered. Position 2 is an N-acetylalanine (A2). At T7 the chain carries Phosphothreonine. Phosphoserine is present on S10. A compositionally biased stretch (acidic residues) spans 21–60 (GSECDPDQEEEEEEEEKGEEVQEVEEEEEEIVVEEEEEGV). A compositionally biased stretch (low complexity) spans 61 to 72 (AEVVQDAQVEAV). Residues 73-95 (AEVEVEADVEEEDVKEVLAEEEC) show a composition bias toward acidic residues. S112 bears the Phosphoserine mark. Residues 132–148 (EDLEEEEEEEEDEDEDD) show a composition bias toward acidic residues. The 72-residue stretch at 158–229 (VTFEDVAVYF…DSPRPEEGDI (72 aa)) folds into the KRAB domain. 5 consecutive C2H2-type zinc fingers follow at residues 345–367 (TTCD…QRYH), 373–395 (FGCE…QRTH), 401–423 (FPCP…RRIH), 429–451 (YRCA…QRTH), and 457–479 (YPCS…QAVH). The segment at 485–512 (HCCPDCGQAFRLRADFQRHRRGGGCAEA) adopts a C2H2-type 6; degenerate zinc-finger fold. Residues 508–574 (GCAEAGGDGP…TPSGKVDPAP (67 aa)) form a disordered region. The segment covering 531-557 (EDTDPGPEGSEVGEADGEAEAAAEERE) has biased composition (acidic residues). C2H2-type zinc fingers lie at residues 691–713 (WICS…QRYH), 719–741 (HRCA…RRTH), 747–769 (FPCP…VRGH), 775–797 (FVCG…GRAH), and 803–825 (YACG…QWAH). K829 participates in a covalent cross-link: Glycyl lysine isopeptide (Lys-Gly) (interchain with G-Cter in SUMO2). 4 C2H2-type zinc fingers span residues 831–853 (HRCP…RRTH), 859–881 (FRCA…RRGH), 887–909 (FPCP…QRTH), and 915–937 (YACA…MKTH). The disordered stretch occupies residues 936-976 (THRGATAAPGSGSAPAPAPKPEAAAKGPSSAGPGERGSALL). Low complexity predominate over residues 939–968 (GATAAPGSGSAPAPAPKPEAAAKGPSSAGP). K955 is covalently cross-linked (Glycyl lysine isopeptide (Lys-Gly) (interchain with G-Cter in SUMO2)).

The protein belongs to the krueppel C2H2-type zinc-finger protein family.

The protein localises to the nucleus. May be involved in transcriptional regulation. This Homo sapiens (Human) protein is Zinc finger protein 316 (ZNF316).